Consider the following 142-residue polypeptide: Large ribosomal subunit protein uL11 (142 aa).

This sequence belongs to the universal ribosomal protein uL11 family. Part of the ribosomal stalk of the 50S ribosomal subunit. Interacts with L10 and the large rRNA to form the base of the stalk. L10 forms an elongated spine to which L12 dimers bind in a sequential fashion forming a multimeric L10(L12)X complex. One or more lysine residues are methylated.

Forms part of the ribosomal stalk which helps the ribosome interact with GTP-bound translation factors. The sequence is that of Large ribosomal subunit protein uL11 from Magnetococcus marinus (strain ATCC BAA-1437 / JCM 17883 / MC-1).